The chain runs to 150 residues: SsrA-binding protein (150 aa).

It belongs to the SmpB family.

The protein localises to the cytoplasm. In terms of biological role, required for rescue of stalled ribosomes mediated by trans-translation. Binds to transfer-messenger RNA (tmRNA), required for stable association of tmRNA with ribosomes. tmRNA and SmpB together mimic tRNA shape, replacing the anticodon stem-loop with SmpB. tmRNA is encoded by the ssrA gene; the 2 termini fold to resemble tRNA(Ala) and it encodes a 'tag peptide', a short internal open reading frame. During trans-translation Ala-aminoacylated tmRNA acts like a tRNA, entering the A-site of stalled ribosomes, displacing the stalled mRNA. The ribosome then switches to translate the ORF on the tmRNA; the nascent peptide is terminated with the 'tag peptide' encoded by the tmRNA and targeted for degradation. The ribosome is freed to recommence translation, which seems to be the essential function of trans-translation. The sequence is that of SsrA-binding protein from Magnetococcus marinus (strain ATCC BAA-1437 / JCM 17883 / MC-1).